A 673-amino-acid chain; its full sequence is DNA ligase (673 aa).

NAD(+) contacts are provided by residues 32–36 (DAEYD), 81–82 (SL), and Glu113. Lys115 (N6-AMP-lysine intermediate) is an active-site residue. Residues Arg136, Glu173, Lys290, and Lys314 each contribute to the NAD(+) site. Residues Cys408, Cys411, Cys426, and Cys432 each contribute to the Zn(2+) site. The BRCT domain maps to 595–673 (EIDSPFAGKT…EAEMIRLLGA (79 aa)).

Belongs to the NAD-dependent DNA ligase family. LigA subfamily. It depends on Mg(2+) as a cofactor. The cofactor is Mn(2+).

The enzyme catalyses NAD(+) + (deoxyribonucleotide)n-3'-hydroxyl + 5'-phospho-(deoxyribonucleotide)m = (deoxyribonucleotide)n+m + AMP + beta-nicotinamide D-nucleotide.. In terms of biological role, DNA ligase that catalyzes the formation of phosphodiester linkages between 5'-phosphoryl and 3'-hydroxyl groups in double-stranded DNA using NAD as a coenzyme and as the energy source for the reaction. It is essential for DNA replication and repair of damaged DNA. This chain is DNA ligase, found in Serratia proteamaculans (strain 568).